Here is a 102-residue protein sequence, read N- to C-terminus: Small ribosomal subunit protein uS10c (102 aa).

Belongs to the universal ribosomal protein uS10 family. Part of the 30S ribosomal subunit.

The protein localises to the plastid. It localises to the chloroplast. Its function is as follows. Involved in the binding of tRNA to the ribosomes. This chain is Small ribosomal subunit protein uS10c, found in Guillardia theta (Cryptophyte).